A 95-amino-acid chain; its full sequence is Integration host factor subunit beta (95 aa).

Residues 52-95 are disordered; that stretch reads SLHHRPPRVGRNPKTGESVHLPSRRVPHFKPGKELRDRVNSIKD. Residues 82 to 95 show a composition bias toward basic and acidic residues; that stretch reads PGKELRDRVNSIKD.

This sequence belongs to the bacterial histone-like protein family. In terms of assembly, heterodimer of an alpha and a beta chain.

This protein is one of the two subunits of integration host factor, a specific DNA-binding protein that functions in genetic recombination as well as in transcriptional and translational control. This Methylococcus capsulatus (strain ATCC 33009 / NCIMB 11132 / Bath) protein is Integration host factor subunit beta.